The sequence spans 379 residues: Putative F-box protein At2g33190 (379 aa).

Positions 6-53 constitute an F-box domain; the sequence is NGWSKLYPDLLRSIFESLSCLDFHRAGTVCSNWYAVSRSCPLYPWRIV.

In Arabidopsis thaliana (Mouse-ear cress), this protein is Putative F-box protein At2g33190.